Here is a 218-residue protein sequence, read N- to C-terminus: N-alpha-acetyltransferase 11 (218 aa).

Residues Met1 to Ala58 are interaction with NAA15. An N-acetyltransferase domain is found at Met1–Ser152. Residues Glu175–Ser218 form a disordered region. A compositionally biased stretch (low complexity) spans Ser196–Thr205. Residues Asp209–Ser218 show a composition bias toward acidic residues.

It belongs to the acetyltransferase family. ARD1 subfamily. In terms of assembly, component of the N-terminal acetyltransferase A (NatA) complex composed of NAA11 and NAA15. Interacts with HIF1A.

Its subcellular location is the cytoplasm. The protein resides in the nucleus. The catalysed reaction is N-terminal glycyl-[protein] + acetyl-CoA = N-terminal N(alpha)-acetylglycyl-[protein] + CoA + H(+). It carries out the reaction N-terminal L-alanyl-[protein] + acetyl-CoA = N-terminal N(alpha)-acetyl-L-alanyl-[protein] + CoA + H(+). The enzyme catalyses N-terminal L-seryl-[protein] + acetyl-CoA = N-terminal N(alpha)-acetyl-L-seryl-[protein] + CoA + H(+). It catalyses the reaction N-terminal L-valyl-[protein] + acetyl-CoA = N-terminal N(alpha)-acetyl-L-valyl-[protein] + CoA + H(+). The catalysed reaction is N-terminal L-cysteinyl-[protein] + acetyl-CoA = N-terminal N(alpha)-acetyl-L-cysteinyl-[protein] + CoA + H(+). It carries out the reaction N-terminal L-threonyl-[protein] + acetyl-CoA = N-terminal N(alpha)-acetyl-L-threonyl-[protein] + CoA + H(+). Functionally, displays alpha (N-terminal) acetyltransferase activity. Proposed alternative catalytic subunit of the N-terminal acetyltransferase A (NatA) complex. In Mus musculus (Mouse), this protein is N-alpha-acetyltransferase 11 (Naa11).